The sequence spans 454 residues: MSVIFHENPGTSLGSVVSSDTNPSFNHTLSIETSPEWIDDLFSNVSFIDSTTHQVIRGFCRDVFVYRLPGGFRIRYWDAAILIPNLLFLLFLFLKCTSVIRKLQTGNSPVLRAFTLLVYVSTLVNIIRCVYSMTLSMTDGIEQTVDQTLWIIIKFFYLTAEFCALTFGLLFGHLDNGRSILIALLGTLLVSIPHTAVQVIVEMKIIDNSWLPLTYFDIESDGGFVFWVLSSATLALVYFFIMCLPLVCCQKYTKLPSNGSFFIYCMMMVTLNILQSMGAALILFKSSDGLCFVGVSTYVYFVLYPPIIYFTFLRRKLKTPPNNTSGLFMYRKHKDEQGSGDLPDSYYPRFSGLTSPSYDDLFDYDRDARFTHYDISTNEYVQHPHYNTYSTPLIMSTVETAESTVTTRTGSDDFAHHRDSMLSEPSTGTTTRHLKGLGPQGSLVFEEDPSSLRL.

Residues Asn26 and Asn44 are each glycosylated (N-linked (GlcNAc...) asparagine). A run of 5 helical transmembrane segments spans residues 80 to 100, 113 to 133, 151 to 171, 180 to 200, and 224 to 244; these read AILIPNLLFLLFLFLKCTSVI, AFTLLVYVSTLVNIIRCVYSM, IIIKFFYLTAEFCALTFGLLF, ILIALLGTLLVSIPHTAVQVI, and FVFWVLSSATLALVYFFIMCL. Asn258 carries an N-linked (GlcNAc...) asparagine glycan. 2 helical membrane passes run 262–282 and 290–310; these read FIYCMMMVTLNILQSMGAALI and LCFVGVSTYVYFVLYPPIIYF. Asn322 and Asn323 each carry an N-linked (GlcNAc...) asparagine glycan. Positions 408–454 are disordered; sequence RTGSDDFAHHRDSMLSEPSTGTTTRHLKGLGPQGSLVFEEDPSSLRL. Over residues 410 to 421 the composition is skewed to basic and acidic residues; it reads GSDDFAHHRDSM. Residues 445–454 are compositionally biased toward acidic residues; that stretch reads FEEDPSSLRL.

It belongs to the UPF0359 family.

The protein localises to the membrane. This chain is Transmembrane protein adipocyte-associated 1 homolog (tpra-1), found in Caenorhabditis briggsae.